The following is a 785-amino-acid chain: Mitochondrial intermediate peptidase (785 aa).

The transit peptide at 1-43 directs the protein to the mitochondrion; the sequence is MLTRPAQNALLKSMQPLFRFRGCLLAKSTSTPRRDISTSSRKL. Position 567 (His-567) interacts with Zn(2+). Residue Glu-568 is part of the active site. The Zn(2+) site is built by His-571 and His-574.

This sequence belongs to the peptidase M3 family. Requires Zn(2+) as cofactor.

Its subcellular location is the mitochondrion matrix. The enzyme catalyses Release of an N-terminal octapeptide as second stage of processing of some proteins imported into the mitochondrion.. Functionally, cleaves proteins, imported into the mitochondrion, to their mature size. While most mitochondrial precursor proteins are processed to the mature form in one step by mitochondrial processing peptidase (MPP), the sequential cleavage by MIP of an octapeptide after initial processing by MPP is a required step for a subgroup of nuclear-encoded precursor proteins destined for the matrix or the inner membrane. This chain is Mitochondrial intermediate peptidase (OCT1), found in Pleurotus djamor (Pink oyster mushroom).